The chain runs to 201 residues: Adenylyl-sulfate kinase (201 aa).

35-42 (GLSGSGKS) contacts ATP. Ser109 functions as the Phosphoserine intermediate in the catalytic mechanism.

This sequence belongs to the APS kinase family.

It carries out the reaction adenosine 5'-phosphosulfate + ATP = 3'-phosphoadenylyl sulfate + ADP + H(+). It functions in the pathway sulfur metabolism; hydrogen sulfide biosynthesis; sulfite from sulfate: step 2/3. In terms of biological role, catalyzes the synthesis of activated sulfate. The chain is Adenylyl-sulfate kinase from Enterobacter sp. (strain 638).